The primary structure comprises 434 residues: F-box only protein 15 (434 aa).

Residues 1 to 41 (MPSEILLKIFSYLDAVSLLCAGCVSRRFYHLANDNFIWIRI) form the F-box domain.

As to quaternary structure, directly interacts with SKP1 and CUL1.

Substrate-recognition component of the SCF (SKP1-CUL1-F-box protein)-type E3 ubiquitin ligase complex. This is F-box only protein 15 (FBXO15) from Macaca fascicularis (Crab-eating macaque).